The chain runs to 364 residues: Uroporphyrinogen decarboxylase (364 aa).

Substrate is bound by residues 37–41 (RQAGR), Phe-55, Ser-85, Asp-86, Tyr-164, Ser-219, and His-336.

This sequence belongs to the uroporphyrinogen decarboxylase family. In terms of assembly, homodimer.

The protein localises to the cytoplasm. It carries out the reaction uroporphyrinogen III + 4 H(+) = coproporphyrinogen III + 4 CO2. It participates in porphyrin-containing compound metabolism; protoporphyrin-IX biosynthesis; coproporphyrinogen-III from 5-aminolevulinate: step 4/4. In terms of biological role, catalyzes the decarboxylation of four acetate groups of uroporphyrinogen-III to yield coproporphyrinogen-III. This Dictyostelium discoideum (Social amoeba) protein is Uroporphyrinogen decarboxylase (hemE).